The chain runs to 347 residues: NADH-ubiquinone oxidoreductase chain 2 (347 aa).

A run of 11 helical transmembrane segments spans residues 3–23, 25–45, 66–86, 96–116, 122–142, 149–169, 178–198, 201–221, 237–257, 274–294, and 323–343; these read PPIL…VMLS, HWLL…PVLM, ASML…QWVV, IMMT…FWVP, ITLT…MSVL, INTN…GWGG, IMAY…IYNP, MILN…LFML, FPLI…LPPL, NMII…YFYL, and TILL…TPML.

The protein belongs to the complex I subunit 2 family. As to quaternary structure, core subunit of respiratory chain NADH dehydrogenase (Complex I) which is composed of 45 different subunits. Interacts with TMEM242.

It is found in the mitochondrion inner membrane. It catalyses the reaction a ubiquinone + NADH + 5 H(+)(in) = a ubiquinol + NAD(+) + 4 H(+)(out). Its function is as follows. Core subunit of the mitochondrial membrane respiratory chain NADH dehydrogenase (Complex I) which catalyzes electron transfer from NADH through the respiratory chain, using ubiquinone as an electron acceptor. Essential for the catalytic activity and assembly of complex I. This is NADH-ubiquinone oxidoreductase chain 2 from Canis rufus (Red wolf).